A 381-amino-acid polypeptide reads, in one-letter code: MYG1 exonuclease (381 aa).

The transit peptide at 1 to 47 directs the protein to the mitochondrion; it reads MGRGFLRGVLTLLPLRSVLQVQHCMLVSEPDLPPKRPRNNLMAPPRI. Residues K267 and K273 each carry the N6-acetyllysine modification.

The protein belongs to the MYG1 family.

It is found in the nucleus. It localises to the nucleoplasm. Its subcellular location is the mitochondrion matrix. The protein localises to the nucleolus. In terms of biological role, 3'-5' RNA exonuclease which cleaves in situ on specific transcripts in both nucleus and mitochondrion. Involved in regulating spatially segregated organellar RNA processing, acts as a coordinator of nucleo-mitochondrial crosstalk. In nucleolus, processes pre-ribosomal RNA involved in ribosome assembly and alters cytoplasmic translation. In mitochondrial matrix, processes 3'-termini of the mito-ribosomal and messenger RNAs and controls translation of mitochondrial proteins. This Rattus norvegicus (Rat) protein is MYG1 exonuclease.